The following is a 1187-amino-acid chain: MGRIKENQSKKKTLLRDSKAYSDQAAAAVTSSDDGFDEPKEITAPKRKLPCGNSDAKKKKFKHPEANVKPPTLEEIKEIRDTRNLFHSNLFKLQVKEMLEELQLKPKYSNYIENWLETFTTAVHEFQDGLLDNCQLEVPLHLHKKLFNFQFLTPTAEPKLIGAAAIGTLLGPKLVVDVALEMPEKCFQKEDYRNLIFDQKRALYLATVASKLKELPACAADHFAYNYHANNPLKPVLELTPTGKIGKHLSLRLYITAPKAIFKLSRFVPWNNNVRPSFFGDKWDESETLPSTQHYNANVLFDLTLAENQKLLLSTFSGHRNFQEGLLLLKVWLRQRQLDVGFSGFSAHILAAYIVYLKQNRLLHQSSSSYQVARTVWNQLANSDWTQGITLCPQQPHQLSTLAGYYDVCFMDVTGYYNICANLPLSVYKAVCAEAKLAVELLNDVRVNSFSQIFMQASPLYTRMDNILKITNPATVDQLLELHVQPQVKYDYANYAHPQLLKLLTDLLQKGLGKRVHAILPLETASKSWTVDTKAPIIGRSLTLGLILDPEHAFEVLDKGPATNEDAEGAAEFRKFWGEKSNLRRFQDGSITEAVVWAAVTDAPSKKRLIVRQIVLHLLEQHLQLEQSDVHYIAGELDIIYSLTSSFKVAKLQTKLKLEQETDAEAVTPLVIHCYDALARQLHTLGDLPLDIVSISGISPVFRYCEPQPLLPQARLVADRMHAGHVLRVIIQLGPSGKWPNELGALRSLKTAFLIQIGKQLKEQQHLHTQLCKEGLLVLKQGYCFLLELAHTKEVALLKQQQTERGVTAYVDNAASREIERRHYILPRVSGALHALHQSHSTFGPTVLIAKRWLATQMIDDGLWPSIATELLVAHLFQQRQMPHTTVAPQTGFIRFLQLLAHSDWASELFLLNFNNSWTEQQITDLEHSYRSERDSYPALCLATAYDQQHAGRLWTTDDCPSKPVLGRVTLLARHALQLIESSLLSPSLGFVRPAQLFIASGEGYDLVIELKPDLLPNTLCYDLGSPFLPFSQRNFRLPLAGIDQLAKIVQQLRSAYSEYAAFFYNPHGGKELAIVWRPASEFAPKPFKVNELQACTPCSVGKVQVVRDTLVEDFKLLLKDFYLRICTPEQLKREQRSHNKPKRYFDDQSEPDVDKPQKKKKKKGTVTKPTDLKKRLKKSKSLSALC.

The span at 1-20 (MGRIKENQSKKKTLLRDSKA) shows a compositional bias: basic and acidic residues. 2 disordered regions span residues 1-64 (MGRI…FKHP) and 1134-1187 (REQR…SALC).

Belongs to the NRAP family. In terms of assembly, part of the small subunit (SSU) processome, composed of more than 70 proteins and the RNA chaperone small nucleolar RNA (snoRNA) U3.

It localises to the nucleus. Its subcellular location is the nucleolus. The protein resides in the chromosome. Its function is as follows. Part of the small subunit (SSU) processome, first precursor of the small eukaryotic ribosomal subunit. During the assembly of the SSU processome in the nucleolus, many ribosome biogenesis factors, an RNA chaperone and ribosomal proteins associate with the nascent pre-rRNA and work in concert to generate RNA folding, modifications, rearrangements and cleavage as well as targeted degradation of pre-ribosomal RNA by the RNA exosome. The chain is Nucleolar protein 6 from Drosophila mojavensis (Fruit fly).